The primary structure comprises 63 residues: DNA-directed RNA polymerase 7 kDa subunit (63 aa).

The protein belongs to the poxviridae DNA-directed RNA polymerase 7 kDa subunit family. As to quaternary structure, the DNA-dependent RNA polymerase used for intermediate and late genes expression consists of eight subunits 147 kDa, 133 kDa, 35 kDa, 30 kDa, 22 kDa, 19 kDa, 18 kDa and 7 kDa totalling more than 500 kDa in mass. The same holoenzyme, with the addition of the transcription-specificity factor RAP94, is used for early gene expression.

It is found in the virion. The enzyme catalyses RNA(n) + a ribonucleoside 5'-triphosphate = RNA(n+1) + diphosphate. Part of the DNA-dependent RNA polymerase which catalyzes the transcription of viral DNA into RNA using the four ribonucleoside triphosphates as substrates. Responsible for the transcription of early, intermediate and late genes. DNA-dependent RNA polymerase associates with the early transcription factor (ETF) thereby allowing the early genes transcription. Late transcription, and probably also intermediate transcription, require newly synthesized RNA polymerase. This chain is DNA-directed RNA polymerase 7 kDa subunit (RPO7), found in Rabbit fibroma virus (strain Kasza) (RFV).